The following is a 370-amino-acid chain: 4-hydroxy-3-methylbut-2-en-1-yl diphosphate synthase (flavodoxin) (370 aa).

Residues C268, C271, C303, and E310 each contribute to the [4Fe-4S] cluster site.

Belongs to the IspG family. Requires [4Fe-4S] cluster as cofactor.

The enzyme catalyses (2E)-4-hydroxy-3-methylbut-2-enyl diphosphate + oxidized [flavodoxin] + H2O + 2 H(+) = 2-C-methyl-D-erythritol 2,4-cyclic diphosphate + reduced [flavodoxin]. The protein operates within isoprenoid biosynthesis; isopentenyl diphosphate biosynthesis via DXP pathway; isopentenyl diphosphate from 1-deoxy-D-xylulose 5-phosphate: step 5/6. Its function is as follows. Converts 2C-methyl-D-erythritol 2,4-cyclodiphosphate (ME-2,4cPP) into 1-hydroxy-2-methyl-2-(E)-butenyl 4-diphosphate. The polypeptide is 4-hydroxy-3-methylbut-2-en-1-yl diphosphate synthase (flavodoxin) (Bacillus anthracis (strain A0248)).